An 87-amino-acid polypeptide reads, in one-letter code: Large ribosomal subunit protein eL34 (87 aa).

This sequence belongs to the eukaryotic ribosomal protein eL34 family.

In Sulfurisphaera tokodaii (strain DSM 16993 / JCM 10545 / NBRC 100140 / 7) (Sulfolobus tokodaii), this protein is Large ribosomal subunit protein eL34.